Here is a 149-residue protein sequence, read N- to C-terminus: Nucleoside diphosphate kinase (149 aa).

Positions 9, 57, 85, 91, 102, and 112 each coordinate ATP. Catalysis depends on H115, which acts as the Pros-phosphohistidine intermediate.

Belongs to the NDK family. As to quaternary structure, homotetramer. The cofactor is Mg(2+).

The protein resides in the cytoplasm. It catalyses the reaction a 2'-deoxyribonucleoside 5'-diphosphate + ATP = a 2'-deoxyribonucleoside 5'-triphosphate + ADP. The catalysed reaction is a ribonucleoside 5'-diphosphate + ATP = a ribonucleoside 5'-triphosphate + ADP. Functionally, major role in the synthesis of nucleoside triphosphates other than ATP. The ATP gamma phosphate is transferred to the NDP beta phosphate via a ping-pong mechanism, using a phosphorylated active-site intermediate. The sequence is that of Nucleoside diphosphate kinase from Staphylococcus saprophyticus subsp. saprophyticus (strain ATCC 15305 / DSM 20229 / NCIMB 8711 / NCTC 7292 / S-41).